A 66-amino-acid chain; its full sequence is Beta-mammal toxin Co2 (66 aa).

The 66-residue stretch at 1–66 (KEGYIVNYHD…VWPLPKKRCN (66 aa)) folds into the LCN-type CS-alpha/beta domain. Intrachain disulfides connect Cys12/Cys65, Cys16/Cys41, Cys25/Cys46, and Cys29/Cys48.

In terms of tissue distribution, expressed by the venom gland.

It localises to the secreted. Beta toxins bind voltage-independently at site-4 of sodium channels (Nav) and shift the voltage of activation toward more negative potentials thereby affecting sodium channel activation and promoting spontaneous and repetitive firing. This toxin acts on human Nav1.1/SCN1A, Nav1.2/SCN2A, Nav1.4/SCN4A and Nav1.6/SCN8A voltage-gated sodium channels. Also, it reduces the peak of sodium currents in Nav1.5/SCN5A at all potentials. In vivo, is lethal to mice when intraperitoneally injected at a dose of 5ug. No activity is observed when injected into crickets or woodlice. This Centruroides ornatus (Scorpion) protein is Beta-mammal toxin Co2.